A 696-amino-acid polypeptide reads, in one-letter code: Serine/threonine-protein kinase sck1 (696 aa).

2 disordered regions span residues 1 to 59 (MTEI…YDPV) and 77 to 118 (HKEQ…TPPS). Polar residues predominate over residues 11–37 (SSNSENTNQASPSTIQSHSTQPVLSND). 2 stretches are compositionally biased toward basic and acidic residues: residues 38 to 49 (HSTKVNDYEGKE) and 77 to 88 (HKEQSLKEDKES). Residues 122 to 272 (IRHDTVVPKD…VQEAWYKLEP (151 aa)) form the C2 domain. A Protein kinase domain is found at 302–563 (FTALRLIGKG…TTELKEHPFF (262 aa)). Residues 308–316 (IGKGTFGQV) and K331 contribute to the ATP site. The active-site Proton acceptor is the D428. The region spanning 564 to 643 (ADINWDLLSK…VNKSIDEQFQ (80 aa)) is the AGC-kinase C-terminal domain. A Phosphothreonine modification is found at T632. S665 is subject to Phosphoserine.

The protein belongs to the protein kinase superfamily. AGC Ser/Thr protein kinase family. cAMP subfamily.

The catalysed reaction is L-seryl-[protein] + ATP = O-phospho-L-seryl-[protein] + ADP + H(+). The enzyme catalyses L-threonyl-[protein] + ATP = O-phospho-L-threonyl-[protein] + ADP + H(+). Protein kinase that is part of growth control pathway which is at least partially redundant with the cAMP pathway. Required for trehalase activation. The protein is Serine/threonine-protein kinase sck1 (sck1) of Schizosaccharomyces pombe (strain 972 / ATCC 24843) (Fission yeast).